The sequence spans 508 residues: Photosystem II CP47 reaction center protein (508 aa).

6 consecutive transmembrane segments (helical) span residues Ala-21–Ser-36, Ile-101–Trp-115, Gly-140–Phe-156, Ile-203–Ser-218, Val-237–Val-252, and Ser-457–Arg-472.

This sequence belongs to the PsbB/PsbC family. PsbB subfamily. As to quaternary structure, PSII is composed of 1 copy each of membrane proteins PsbA, PsbB, PsbC, PsbD, PsbE, PsbF, PsbH, PsbI, PsbJ, PsbK, PsbL, PsbM, PsbT, PsbX, PsbY, PsbZ, Psb30/Ycf12, at least 3 peripheral proteins of the oxygen-evolving complex and a large number of cofactors. It forms dimeric complexes. The cofactor is Binds multiple chlorophylls. PSII binds additional chlorophylls, carotenoids and specific lipids..

Its subcellular location is the plastid. It is found in the chloroplast thylakoid membrane. Its function is as follows. One of the components of the core complex of photosystem II (PSII). It binds chlorophyll and helps catalyze the primary light-induced photochemical processes of PSII. PSII is a light-driven water:plastoquinone oxidoreductase, using light energy to abstract electrons from H(2)O, generating O(2) and a proton gradient subsequently used for ATP formation. The chain is Photosystem II CP47 reaction center protein from Lotus japonicus (Lotus corniculatus var. japonicus).